A 244-amino-acid polypeptide reads, in one-letter code: Derlin-2.2 (244 aa).

At 1 to 21 the chain is on the cytoplasmic side; sequence MAQAVEEWYKQMPIITRSYLT. Residues 22–42 traverse the membrane as a helical segment; sequence AAVITTVGCSLDIISPYNLYL. Topologically, residues 43-96 are lumenal; sequence NPTLVVKQYQYWRLVTNFLYFRKMDLDFMFHMFFLARYCKLLEENSFRGKTADF. A helical transmembrane segment spans residues 97 to 117; sequence LYMLLFGASVLTGIVLIGGMI. The Cytoplasmic segment spans residues 118–121; the sequence is PYLS. A helical transmembrane segment spans residues 122–142; sequence ASFAKIIFLSNSLTFMMVYVW. Over 143 to 152 the chain is Lumenal; sequence SKQNPYIHMS. Residues 153–173 form a helical membrane-spanning segment; it reads FLGLFTFTAAYLPWVLLGFSI. Residues 174–244 lie on the Cytoplasmic side of the membrane; sequence LVGASAWVDL…AAPFDEIHQD (71 aa).

Belongs to the derlin family.

The protein localises to the endoplasmic reticulum membrane. In terms of biological role, may be involved in the degradation process of specific misfolded endoplasmic reticulum (ER) luminal proteins. This is Derlin-2.2 (DER2.2) from Arabidopsis thaliana (Mouse-ear cress).